We begin with the raw amino-acid sequence, 493 residues long: MFS-type transporter efuF (493 aa).

11 helical membrane passes run 90-110 (ITLVLFYVTFCLLDVPANMLL), 117-137 (IMLPTLMMGWGSMTLIQCAVH), 147-167 (LLMGAFEAGFMAGVVYYLTTF), 179-199 (IFYGAATIAGAFSGLLAYGVF), 211-231 (FLMIIEGSATILLASFAYWHL), 279-299 (IALYAVIGISYGVASASVGNF), 316-336 (LYTVAPYCVGCVILLAQCTSS), 343-363 (STHLAGAMLLTFVGFILLITL), 370-390 (GPTYFACFLLAAGAFTPSCIF), 406-426 (AVTGFMVGASNSGGIISSLAF), and 435-455 (IPALIVTATFQGVGIVLVLGF).

The protein belongs to the major facilitator superfamily.

The protein resides in the membrane. In terms of biological role, MFS-type transporter; part of the gene cluster that mediates the biosynthesis of enfumafungin, a glycosylated fernene-type triterpenoid with potent antifungal activity, mediated by its interaction with beta-1,3-glucan synthase and the fungal cell wall. Might facilitate the transport of glucose units to the subcellular site of enfumafungin biosynthesis. The chain is MFS-type transporter efuF from Hormonema carpetanum.